The following is a 283-amino-acid chain: MKIFEKAPAKLNLGLDIKGRCDDGYHELAMIMVSIDLNDYVTISELKEDCIVIDSDSSKMPLNNDNDVFKAADIIKNQYGINKGVHIRLEKSIPVCAGLGGGSTDAAATIRALNRLWNLQMDYDEMVAIGFKIGSDVPYCLGGGCSLVLGKGEIVKPLPTLRPCWIVLVKPDFGISTKSIFRDIDCKSISRVDIDLLKSAILSSDYQLMVKSMGNSLEDITITKNPVISTIKERMLNSGADVALMTGSGPTVFSMCSTEKKADRVFNSMKGFCKEVYKVRLLR.

Residue Lys10 is part of the active site. 94–104 lines the ATP pocket; it reads PVCAGLGGGST. Residue Asp136 is part of the active site.

The protein belongs to the GHMP kinase family. IspE subfamily.

The enzyme catalyses 4-CDP-2-C-methyl-D-erythritol + ATP = 4-CDP-2-C-methyl-D-erythritol 2-phosphate + ADP + H(+). Catalyzes the phosphorylation of the position 2 hydroxy group of 4-diphosphocytidyl-2C-methyl-D-erythritol. This is Putative 4-diphosphocytidyl-2-C-methyl-D-erythritol kinase (ispE) from Streptococcus agalactiae serotype Ia (strain ATCC 27591 / A909 / CDC SS700).